A 636-amino-acid chain; its full sequence is DNA mismatch repair protein MutL (636 aa).

The interval Ala341–Ala420 is disordered. Positions Glu348–Arg358 are enriched in basic and acidic residues.

This sequence belongs to the DNA mismatch repair MutL/HexB family.

In terms of biological role, this protein is involved in the repair of mismatches in DNA. It is required for dam-dependent methyl-directed DNA mismatch repair. May act as a 'molecular matchmaker', a protein that promotes the formation of a stable complex between two or more DNA-binding proteins in an ATP-dependent manner without itself being part of a final effector complex. In Bacillus licheniformis (strain ATCC 14580 / DSM 13 / JCM 2505 / CCUG 7422 / NBRC 12200 / NCIMB 9375 / NCTC 10341 / NRRL NRS-1264 / Gibson 46), this protein is DNA mismatch repair protein MutL.